We begin with the raw amino-acid sequence, 172 residues long: Centrin-2 (172 aa).

Residues 1–30 (MASNFKKANMASSSQRKRMSPKPELTEEQK) are disordered. N-acetylalanine is present on Ala-2. The required for self-assembly stretch occupies residues 2 to 25 (ASNFKKANMASSSQRKRMSPKPEL). The residue at position 20 (Ser-20) is a Phosphoserine. Lys-22 is covalently cross-linked (Glycyl lysine isopeptide (Lys-Gly) (interchain with G-Cter in SUMO2)). A Phosphothreonine modification is found at Thr-26. 4 consecutive EF-hand domains span residues 28-63 (EQKQEIREAFDLFDADGTGTIDVKELKVAMRALGFE), 64-99 (PKKEEIKKMISEIDKEGTGKMNFGDFLTVMTQKMSE), 101-136 (DTKEEILKAFKLFDDDETGKISFKNLKRVAKELGEN), and 137-172 (LTDEELQEMIDEADRDGDGEVSEQEFLRIMKKTSLY). 5 residues coordinate Ca(2+): Asp-41, Asp-43, Thr-45, Thr-47, and Glu-52. Ca(2+)-binding residues include Asp-150, Asp-152, Asp-154, Glu-156, and Glu-161.

The protein belongs to the centrin family. As to quaternary structure, monomer. Homooligomer. Interacts with SFI1. Interacts with CCP110. Component of the XPC complex composed of XPC, RAD23B and CETN2. Component of the nuclear pore complex (NPC)-associated TREX-2 complex (transcription and export complex 2), composed of at least GANP, 2 copies of ENY2, PCID2, SEM1/DSS1, and either centrin CETN2 or centrin CETN3. The TREX-2 complex also associates with ALYREF/ALY and with the nucleoporin NUP153. Interacts with USP49. Forms a microtubule-associated complex with POC5, POC1B and FAM161A. Interacts with CCDC15.

It is found in the cytoplasm. The protein localises to the cytoskeleton. It localises to the microtubule organizing center. Its subcellular location is the centrosome. The protein resides in the centriole. It is found in the nucleus envelope. The protein localises to the nucleus. It localises to the nuclear pore complex. Plays a fundamental role in microtubule organizing center structure and function. Required for centriole duplication and correct spindle formation. Has a role in regulating cytokinesis and genome stability via cooperation with CALM1 and CCP110. In terms of biological role, involved in global genome nucleotide excision repair (GG-NER) by acting as component of the XPC complex. Cooperatively with RAD23B appears to stabilize XPC. In vitro, stimulates DNA binding of the XPC:RAD23B dimer. Its function is as follows. The XPC complex is proposed to represent the first factor bound at the sites of DNA damage and together with other core recognition factors, XPA, RPA and the TFIIH complex, is part of the pre-incision (or initial recognition) complex. The XPC complex recognizes a wide spectrum of damaged DNA characterized by distortions of the DNA helix such as single-stranded loops, mismatched bubbles or single-stranded overhangs. The orientation of XPC complex binding appears to be crucial for inducing a productive NER. XPC complex is proposed to recognize and to interact with unpaired bases on the undamaged DNA strand which is followed by recruitment of the TFIIH complex and subsequent scanning for lesions in the opposite strand in a 5'-to-3' direction by the NER machinery. Cyclobutane pyrimidine dimers (CPDs) which are formed upon UV-induced DNA damage esacpe detection by the XPC complex due to a low degree of structural perurbation. Instead they are detected by the UV-DDB complex which in turn recruits and cooperates with the XPC complex in the respective DNA repair. Functionally, as a component of the TREX-2 complex, involved in the export of mRNAs to the cytoplasm through the nuclear pores. The protein is Centrin-2 (CETN2) of Homo sapiens (Human).